A 73-amino-acid chain; its full sequence is UPF0346 protein Lreu_0775 (73 aa).

This sequence belongs to the UPF0346 family.

This chain is UPF0346 protein Lreu_0775, found in Limosilactobacillus reuteri (strain DSM 20016) (Lactobacillus reuteri).